An 849-amino-acid polypeptide reads, in one-letter code: Probable ubiquitin carboxyl-terminal hydrolase 1 (849 aa).

A DUSP domain is found at 20–120; it reads QPASLPFQDS…EGLAIERKVL (101 aa). The USP domain occupies 279 to 848; sequence CGLYNLGNSC…SAYVLFYRAK (570 aa). The Nucleophile role is filled by Cys288. The active-site Proton acceptor is His806.

The protein belongs to the peptidase C19 family.

It catalyses the reaction Thiol-dependent hydrolysis of ester, thioester, amide, peptide and isopeptide bonds formed by the C-terminal Gly of ubiquitin (a 76-residue protein attached to proteins as an intracellular targeting signal).. The chain is Probable ubiquitin carboxyl-terminal hydrolase 1 (ubp1) from Schizosaccharomyces pombe (strain 972 / ATCC 24843) (Fission yeast).